A 103-amino-acid chain; its full sequence is MFEGMDLGKMGKMMEQMQEKAKELQEQAKNVEFTAKAGGGLIEVTANGAGEVIDMNIDDSLLEDKESLQILLISAMNDVNKMIEDNKKSQAMGMMGGMNPFGS.

The protein belongs to the YbaB/EbfC family. In terms of assembly, homodimer.

It is found in the cytoplasm. The protein resides in the nucleoid. Binds to DNA and alters its conformation. May be involved in regulation of gene expression, nucleoid organization and DNA protection. This is Nucleoid-associated protein SUN_2278 from Sulfurovum sp. (strain NBC37-1).